We begin with the raw amino-acid sequence, 687 residues long: Triadin (687 aa).

Over 1-47 (MTEITAEGNASITTTVIDNKNGSVPKSPGKVLKRTVTEDIVTTFSSP) the chain is Cytoplasmic. The chain crosses the membrane as a helical span at residues 48–68 (AAWLLVIALIITWSAVAIVMF). At 69–687 (DLVDYKNFSA…NSPGQKQQEQ (619 aa)) the chain is on the lumenal side. Residues 117 to 130 (DGDEDDEDADEDID) show a composition bias toward acidic residues. Disordered regions lie at residues 117-265 (DGDE…EQKD), 280-643 (GDLK…QKSP), and 660-687 (FQFP…QQEQ). The span at 131–265 (KGEIEEPPLK…PAVPKHEQKD (135 aa)) shows a compositional bias: basic and acidic residues. The segment covering 295–306 (LTASRPALSTPS) has biased composition (polar residues). Phosphoserine occurs at positions 303 and 306. A compositionally biased stretch (basic and acidic residues) spans 307–356 (LEEKEKEEKKKVEKKVTSDTKKKEKGEAKKKSEKETVIDGKGKEPGKPPE). Low complexity predominate over residues 357 to 370 (TKQTTTKLTTQAAA). Basic and acidic residues-rich tracts occupy residues 371-390 (TKDE…EEKP), 396-431 (EKKE…KEEI), 442-459 (GKKE…DVKP), and 466-501 (LKKE…KEAK). An N-linked (GlcNAc...) asparagine glycan is attached at asparagine 514. 2 stretches are compositionally biased toward basic and acidic residues: residues 539–583 (TAEK…KVPP) and 594–630 (TRAE…DKEV). Polar residues-rich tracts occupy residues 631–643 (TNNV…QKSP) and 667–687 (VQHS…QQEQ).

Homooligomer of variable subunit number; disulfide-linked. Interacts with CASQ1 in skeletal muscle. Interacts with CASQ2. Interacts with RYR1 in skeletal muscle. Post-translationally, phosphorylated by CaMK2. N-glycosylated. As to expression, detected in skeletal muscle (at protein level). Detected in skeletal muscle.

It localises to the sarcoplasmic reticulum membrane. It is found in the microsome. The protein localises to the cell membrane. Its subcellular location is the sarcolemma. Its function is as follows. Contributes to the regulation of lumenal Ca2+ release via the sarcoplasmic reticulum calcium release channels RYR1 and RYR2, a key step in triggering skeletal and heart muscle contraction. Required for normal organization of the triad junction, where T-tubules and the sarcoplasmic reticulum terminal cisternae are in close contact. Required for normal skeletal muscle strength. Plays a role in excitation-contraction coupling in the heart and in regulating the rate of heart beats. The sequence is that of Triadin from Rattus norvegicus (Rat).